Reading from the N-terminus, the 131-residue chain is Translation initiation factor 5A (131 aa).

K37 carries the post-translational modification Hypusine.

The protein belongs to the eIF-5A family.

Its subcellular location is the cytoplasm. Functionally, functions by promoting the formation of the first peptide bond. This Methanococcus maripaludis (strain C5 / ATCC BAA-1333) protein is Translation initiation factor 5A (eIF5A).